The primary structure comprises 369 residues: Septin-5 (369 aa).

T13 is subject to Phosphothreonine. Residues 41-314 (KGFDFTLMVA…ENYRAHCIQQ (274 aa)) enclose the Septin-type G domain. Residues 51–58 (GESGLGKS) form a G1 motif region. GTP is bound by residues 51–58 (GESGLGKS), T85, and G111. Residues 108–111 (DTPG) are G3 motif. R168 is modified (omega-N-methylarginine). Positions 189–192 (AKAD) are G4 motif. 190-198 (KADCLVPSE) serves as a coordination point for GTP. S225 bears the Phosphoserine mark. GTP is bound by residues G248 and R263. At S327 the chain carries Phosphoserine. T336 is subject to Phosphothreonine. Residues 338-369 (DAETEKLIRMKDEELRRMQEMLQKMKQQMQDQ) adopt a coiled-coil conformation.

The protein belongs to the TRAFAC class TrmE-Era-EngA-EngB-Septin-like GTPase superfamily. Septin GTPase family. As to quaternary structure, septins polymerize into heterooligomeric protein complexes that form filaments, and can associate with cellular membranes, actin filaments and microtubules. GTPase activity is required for filament formation. Interacts with SEPTIN2 and SEPTIN5. Interaction with SEPTIN4 not detected. In platelets, associated with a complex containing STX4. Interacts with PRKN; this interaction leads to SEPTIN5 ubiquitination and degradation. Interacts with DYRK1A. Interacts with STX1A; in the cerebellar cortex. Phosphorylated by DYRK1A.

The protein localises to the cytoplasm. Its subcellular location is the cytoskeleton. In terms of biological role, filament-forming cytoskeletal GTPase. Involved in cytokinesis (Potential). May play a role in platelet secretion. The protein is Septin-5 of Mus musculus (Mouse).